The chain runs to 144 residues: Eukaryotic translation initiation factor 1A (144 aa).

Residues 1–15 (MPKNKGKGGKNRRRG) are compositionally biased toward basic residues. Disordered regions lie at residues 1–26 (MPKN…KREL) and 114–144 (KINE…IDDI). Residues 16–26 (KNENESEKREL) are compositionally biased toward basic and acidic residues. One can recognise an S1-like domain in the interval 22–96 (EKRELVFKED…NKADVILKYN (75 aa)). Over residues 124-144 (GDDDEIQFDDIGDDDEDIDDI) the composition is skewed to acidic residues.

Belongs to the eIF-1A family. Component of the 43S pre-initiation complex (43S PIC), which is composed of the 40S ribosomal subunit, EIF1, eIF1A (EIF1AX), eIF3 complex, EIF5 and eIF2-GTP-initiator tRNA complex (eIF2 ternary complex). Interacts with EIF5; this interaction contributes to the maintenance of EIF1 within the open 43S PIC. Interacts through its C-terminal domain (CTD) with the CTD of EIF5B; from the location of the start codon by the 43S complex until the formation of the 80S complex.

The protein resides in the cytoplasm. Component of the 43S pre-initiation complex (43S PIC), which binds to the mRNA cap-proximal region, scans mRNA 5'-untranslated region, and locates the initiation codon. This protein enhances formation of the cap-proximal complex. Together with EIF1, facilitates scanning, start codon recognition, promotion of the assembly of 48S complex at the initiation codon (43S PIC becomes 48S PIC after the start codon is reached), and dissociation of aberrant complexes. After start codon location, together with EIF5B orients the initiator methionine-tRNA in a conformation that allows 60S ribosomal subunit joining to form the 80S initiation complex. Is released after 80S initiation complex formation, just after GTP hydrolysis by EIF5B, and before release of EIF5B. Its globular part is located in the A site of the 40S ribosomal subunit. Its interaction with EIF5 during scanning contribute to the maintenance of EIF1 within the open 43S PIC. In contrast to yeast orthologs, does not bind EIF1. The sequence is that of Eukaryotic translation initiation factor 1A (Eif1a) from Mus musculus (Mouse).